We begin with the raw amino-acid sequence, 116 residues long: MDKKTSRLRRAIRARKKIQELGVNRLVVHRTPRHIYAQVINPEAQVVAAASTVEKAVKEQLKSTGNVDAAKAVGKFIAERAIEKGVTTVAFDRSGFKYHGRVAALADAAREAGLQF.

It belongs to the universal ribosomal protein uL18 family. As to quaternary structure, part of the 50S ribosomal subunit; part of the 5S rRNA/L5/L18/L25 subcomplex. Contacts the 5S and 23S rRNAs.

Its function is as follows. This is one of the proteins that bind and probably mediate the attachment of the 5S RNA into the large ribosomal subunit, where it forms part of the central protuberance. In Shewanella sp. (strain ANA-3), this protein is Large ribosomal subunit protein uL18.